A 360-amino-acid chain; its full sequence is Phospho-N-acetylmuramoyl-pentapeptide-transferase (360 aa).

Helical transmembrane passes span 26-46, 73-93, 97-117, 135-155, 168-188, 199-219, 236-256, 263-283, 288-308, and 338-358; these read AILGLLTALVFSLWWGPILIK, TMGGILILAGIFISVLLWGDL, YVLVTLFVLASFGVIGFIDDY, ALQSIAALVVAVYLYSSSTMV, IMPQLGFMFILLAYFTIVGAS, GLAIMPTVMVAAAFALIAYLS, AGELVIVCTAMVGAGLGFLWF, VFMGDVGSLALGAALGVIAIL, ILLVIMGGVFVMETVSVILQV, and VIVRFWIISLFLVLLGLATLK.

It belongs to the glycosyltransferase 4 family. MraY subfamily. It depends on Mg(2+) as a cofactor.

Its subcellular location is the cell inner membrane. The enzyme catalyses UDP-N-acetyl-alpha-D-muramoyl-L-alanyl-gamma-D-glutamyl-meso-2,6-diaminopimeloyl-D-alanyl-D-alanine + di-trans,octa-cis-undecaprenyl phosphate = di-trans,octa-cis-undecaprenyl diphospho-N-acetyl-alpha-D-muramoyl-L-alanyl-D-glutamyl-meso-2,6-diaminopimeloyl-D-alanyl-D-alanine + UMP. It participates in cell wall biogenesis; peptidoglycan biosynthesis. Its function is as follows. Catalyzes the initial step of the lipid cycle reactions in the biosynthesis of the cell wall peptidoglycan: transfers peptidoglycan precursor phospho-MurNAc-pentapeptide from UDP-MurNAc-pentapeptide onto the lipid carrier undecaprenyl phosphate, yielding undecaprenyl-pyrophosphoryl-MurNAc-pentapeptide, known as lipid I. This chain is Phospho-N-acetylmuramoyl-pentapeptide-transferase, found in Shewanella frigidimarina (strain NCIMB 400).